Here is a 204-residue protein sequence, read N- to C-terminus: Holliday junction branch migration complex subunit RuvA (204 aa).

The tract at residues 1-64 is domain I; that stretch reads MIGKLKGTLE…EEAIRLFGFA (64 aa). A domain II region spans residues 65-143; that stretch reads TRAEQEWFCM…PFEQAVKTVS (79 aa). Residues 144–154 are flexible linker; that stretch reads VPQREITHQPA. A domain III region spans residues 154–204; that stretch reads AHDALSALMKLGFEREQAARALALAMNALEGEAVSSALLIRHSLKLLSSPT.

The protein belongs to the RuvA family. Homotetramer. Forms an RuvA(8)-RuvB(12)-Holliday junction (HJ) complex. HJ DNA is sandwiched between 2 RuvA tetramers; dsDNA enters through RuvA and exits via RuvB. An RuvB hexamer assembles on each DNA strand where it exits the tetramer. Each RuvB hexamer is contacted by two RuvA subunits (via domain III) on 2 adjacent RuvB subunits; this complex drives branch migration. In the full resolvosome a probable DNA-RuvA(4)-RuvB(12)-RuvC(2) complex forms which resolves the HJ.

Its subcellular location is the cytoplasm. Functionally, the RuvA-RuvB-RuvC complex processes Holliday junction (HJ) DNA during genetic recombination and DNA repair, while the RuvA-RuvB complex plays an important role in the rescue of blocked DNA replication forks via replication fork reversal (RFR). RuvA specifically binds to HJ cruciform DNA, conferring on it an open structure. The RuvB hexamer acts as an ATP-dependent pump, pulling dsDNA into and through the RuvAB complex. HJ branch migration allows RuvC to scan DNA until it finds its consensus sequence, where it cleaves and resolves the cruciform DNA. The protein is Holliday junction branch migration complex subunit RuvA of Bartonella tribocorum (strain CIP 105476 / IBS 506).